A 708-amino-acid polypeptide reads, in one-letter code: O-antigen chain terminator bifunctional methyltransferase/kinase WbdD (708 aa).

The interval 1–210 (MTKDLNTLVS…VPRPMYLVSN (210 aa)) is methyltransferase. Residues 16–17 (YQ), R36, G61, 82–87 (DFQQEN), 108–111 (GRIE), and L128 contribute to the S-adenosyl-L-methionine site. The segment at 211 to 459 (HRVLINDFNQ…AKLPSAEQQR (249 aa)) is kinase. ATP contacts are provided by residues P229, H237, 241–243 (RRY), K252, E274, 309–311 (EKL), M358, and D369. The stretch at 485-594 (AGSEALRGQI…EIEKIHRSRS (110 aa)) forms a coiled coil. Residues 601 to 669 (YRYLGLQIHL…RLYRRMNPLP (69 aa)) are required for membrane-binding. A required for localizing WbdA to the membrane region spans residues 687–708 (VMHPELLPPEVYEIYLKLTKNK).

Belongs to the WbdD family. In terms of assembly, interacts with WbdA.

The protein localises to the cell inner membrane. The enzyme catalyses 3-O-phospho-alpha-D-Man-(1-&gt;2)-alpha-D-Man-(1-&gt;2)-[alpha-D-Man-(1-&gt;3)-alpha-D-Man-(1-&gt;3)-alpha-D-Man-(1-&gt;2)-alpha-D-Man-(1-&gt;2)](n)-alpha-D-Man-(1-&gt;3)-alpha-D-Man-(1-&gt;3)-alpha-D-Man-(1-&gt;3)-alpha-D-GlcNAc-di-trans,octa-cis-undecaprenyl diphosphate + S-adenosyl-L-methionine = 3-O-methylphospho-alpha-D-Man-(1-&gt;2)-alpha-D-Man-(1-&gt;2)-[alpha-D-Man-(1-&gt;3)-alpha-D-Man-(1-&gt;3)-alpha-D-Man-(1-&gt;2)-alpha-D-Man-(1-&gt;2)](n)-alpha-D-Man-(1-&gt;3)-alpha-D-Man-(1-&gt;3)-alpha-D-Man-(1-&gt;3)-alpha-D-GlcNAc-di-trans,octa-cis-undecaprenyl diphosphate + S-adenosyl-L-homocysteine. It carries out the reaction alpha-D-Man-(1-&gt;2)-alpha-D-Man-(1-&gt;2)-[alpha-D-Man-(1-&gt;3)-alpha-D-Man-(1-&gt;3)-alpha-D-Man-(1-&gt;2)-alpha-D-Man-(1-&gt;2)](n)-alpha-D-Man-(1-&gt;3)-alpha-D-Man-(1-&gt;3)-alpha-D-Man-(1-&gt;3)-alpha-D-GlcNAc-di-trans,octa-cis-undecaprenyl diphosphate + ATP = 3-O-phospho-alpha-D-Man-(1-&gt;2)-alpha-D-Man-(1-&gt;2)-[alpha-D-Man-(1-&gt;3)-alpha-D-Man-(1-&gt;3)-alpha-D-Man-(1-&gt;2)-alpha-D-Man-(1-&gt;2)](n)-alpha-D-Man-(1-&gt;3)-alpha-D-Man-(1-&gt;3)-alpha-D-Man-(1-&gt;3)-alpha-D-GlcNAc-di-trans,octa-cis-undecaprenyl diphosphate + ADP + H(+). It participates in bacterial outer membrane biogenesis; LPS O-antigen biosynthesis. Functionally, regulates the length of the LPS O-antigen polysaccharide chain. Stops the polymerization of the chain by phosphorylating and then methylating the phosphate on the terminal sugar. This terminal modification is essential for export of the O-antigen across the inner membrane. WbdD is also required for correct localization of the WbdA mannosyltransferase. The protein is O-antigen chain terminator bifunctional methyltransferase/kinase WbdD of Escherichia coli.